We begin with the raw amino-acid sequence, 677 residues long: Mitochondrial disaggregase (677 aa).

The transit peptide at 1 to 57 (MMLSAVLRRTAPAPRLFLGLIKSPSLQSRGGAYNRSVITGDRGEPQRLRTAAWVRPG) directs the protein to the mitochondrion. Residues 64–103 (PGRGAATGGRRGERTEIPYLTAASSGRGPSPEETLPGQDS) form a disordered region. Residues 92 to 126 (PSPEETLPGQDSWNGVPNKAGLGMWALAMALVVQC) form an autoinhibitory region. ANK repeat units follow at residues 133–162 (NKDA…DVNA), 166–195 (LGWT…DPNL), 235–265 (KGCT…PLQR), and 268–297 (MGHT…EKQR). 10 residues coordinate ATP: histidine 316, isoleucine 318, serine 353, glycine 354, isoleucine 355, glycine 356, lysine 357, threonine 358, glutamate 425, and asparagine 466. The interval 477–505 (LQLRQEALEMSRNRIAENLGDVQISDKIT) is regulatory; slows ATPase and disaggregase activities. ATP is bound at residue arginine 531. An N6-acetyllysine modification is found at lysine 559. Arginine 590 contributes to the ATP binding site.

The protein belongs to the ClpA/ClpB family. In terms of assembly, homododecamer when substrate-bound; the homododecamer consists of 2 homohexamers stacked head-to-head via ANK repeat-mediated interactions. The active substrate-bound form is likely to exist in a dynamic equilibrium between homohexamers and homododecamers. Homotetradecamer in the unbound state which is remodeled upon substrate binding into the homododecamer. Interacts with PHB and PHB2. Interacts with MAVS; the interaction is enhanced by Sendai virus infection. Proteolytically cleaved by protease PARL. ATP-dependent protein disaggregase activity is stimulated by PARL-mediated cleavage of the N-terminal autoinhibitory peptide.

Its subcellular location is the mitochondrion intermembrane space. The catalysed reaction is ATP + H2O = ADP + phosphate + H(+). Its activity is regulated as follows. Disaggregase activity is inhibited by ADP. In terms of biological role, functions as a regulatory ATPase and participates in secretion/protein trafficking process. Has ATP-dependent protein disaggregase activity and is required to maintain the solubility of key mitochondrial proteins. Involved in mitochondrial-mediated antiviral innate immunity, activates RIG-I-mediated signal transduction and production of IFNB1 and pro-inflammatory cytokine IL6. Plays a role in granulocyte differentiation. This Rattus norvegicus (Rat) protein is Mitochondrial disaggregase.